The chain runs to 1291 residues: DNA-directed RNA polymerase subunit beta (1291 aa).

Belongs to the RNA polymerase beta chain family. In terms of assembly, the RNAP catalytic core consists of 2 alpha, 1 beta, 1 beta' and 1 omega subunit. When a sigma factor is associated with the core the holoenzyme is formed, which can initiate transcription.

The enzyme catalyses RNA(n) + a ribonucleoside 5'-triphosphate = RNA(n+1) + diphosphate. Its function is as follows. DNA-dependent RNA polymerase catalyzes the transcription of DNA into RNA using the four ribonucleoside triphosphates as substrates. The protein is DNA-directed RNA polymerase subunit beta of Cytophaga hutchinsonii (strain ATCC 33406 / DSM 1761 / CIP 103989 / NBRC 15051 / NCIMB 9469 / D465).